The sequence spans 232 residues: Phosphatidylserine decarboxylase proenzyme (232 aa).

The Schiff-base intermediate with substrate; via pyruvic acid role is filled by serine 190. Serine 190 is modified (pyruvic acid (Ser); by autocatalysis).

This sequence belongs to the phosphatidylserine decarboxylase family. PSD-A subfamily. As to quaternary structure, heterodimer of a large membrane-associated beta subunit and a small pyruvoyl-containing alpha subunit. Requires pyruvate as cofactor. Post-translationally, is synthesized initially as an inactive proenzyme. Formation of the active enzyme involves a self-maturation process in which the active site pyruvoyl group is generated from an internal serine residue via an autocatalytic post-translational modification. Two non-identical subunits are generated from the proenzyme in this reaction, and the pyruvate is formed at the N-terminus of the alpha chain, which is derived from the carboxyl end of the proenzyme. The post-translation cleavage follows an unusual pathway, termed non-hydrolytic serinolysis, in which the side chain hydroxyl group of the serine supplies its oxygen atom to form the C-terminus of the beta chain, while the remainder of the serine residue undergoes an oxidative deamination to produce ammonia and the pyruvoyl prosthetic group on the alpha chain.

It is found in the cell membrane. It catalyses the reaction a 1,2-diacyl-sn-glycero-3-phospho-L-serine + H(+) = a 1,2-diacyl-sn-glycero-3-phosphoethanolamine + CO2. The protein operates within phospholipid metabolism; phosphatidylethanolamine biosynthesis; phosphatidylethanolamine from CDP-diacylglycerol: step 2/2. Catalyzes the formation of phosphatidylethanolamine (PtdEtn) from phosphatidylserine (PtdSer). This chain is Phosphatidylserine decarboxylase proenzyme, found in Rhizobium johnstonii (strain DSM 114642 / LMG 32736 / 3841) (Rhizobium leguminosarum bv. viciae).